Here is a 326-residue protein sequence, read N- to C-terminus: Aspartate carbamoyltransferase catalytic subunit (326 aa).

The carbamoyl phosphate site is built by Arg76 and Thr77. Lys104 lines the L-aspartate pocket. Carbamoyl phosphate contacts are provided by Arg126, His156, and Gln159. Residues Arg189 and Arg244 each contribute to the L-aspartate site. Carbamoyl phosphate is bound by residues Gly285 and Pro286.

It belongs to the aspartate/ornithine carbamoyltransferase superfamily. ATCase family. Heterododecamer (2C3:3R2) of six catalytic PyrB chains organized as two trimers (C3), and six regulatory PyrI chains organized as three dimers (R2).

The catalysed reaction is carbamoyl phosphate + L-aspartate = N-carbamoyl-L-aspartate + phosphate + H(+). The protein operates within pyrimidine metabolism; UMP biosynthesis via de novo pathway; (S)-dihydroorotate from bicarbonate: step 2/3. Its function is as follows. Catalyzes the condensation of carbamoyl phosphate and aspartate to form carbamoyl aspartate and inorganic phosphate, the committed step in the de novo pyrimidine nucleotide biosynthesis pathway. The chain is Aspartate carbamoyltransferase catalytic subunit from Polynucleobacter asymbioticus (strain DSM 18221 / CIP 109841 / QLW-P1DMWA-1) (Polynucleobacter necessarius subsp. asymbioticus).